A 409-amino-acid polypeptide reads, in one-letter code: Phosphopentomutase (409 aa).

Residues Asp-10, Asp-308, His-313, Asp-349, His-350, and His-361 each coordinate Mn(2+).

Belongs to the phosphopentomutase family. It depends on Mn(2+) as a cofactor.

The protein resides in the cytoplasm. It carries out the reaction 2-deoxy-alpha-D-ribose 1-phosphate = 2-deoxy-D-ribose 5-phosphate. It catalyses the reaction alpha-D-ribose 1-phosphate = D-ribose 5-phosphate. Its pathway is carbohydrate degradation; 2-deoxy-D-ribose 1-phosphate degradation; D-glyceraldehyde 3-phosphate and acetaldehyde from 2-deoxy-alpha-D-ribose 1-phosphate: step 1/2. Isomerase that catalyzes the conversion of deoxy-ribose 1-phosphate (dRib-1-P) and ribose 1-phosphate (Rib-1-P) to deoxy-ribose 5-phosphate (dRib-5-P) and ribose 5-phosphate (Rib-5-P), respectively. This chain is Phosphopentomutase, found in Buchnera aphidicola subsp. Schizaphis graminum (strain Sg).